The primary structure comprises 157 residues: Cyclic pyranopterin monophosphate synthase (157 aa).

Substrate contacts are provided by residues 74 to 76 (MCH) and 112 to 113 (ME). The active site involves Asp127.

The protein belongs to the MoaC family. Homohexamer; trimer of dimers.

It carries out the reaction (8S)-3',8-cyclo-7,8-dihydroguanosine 5'-triphosphate = cyclic pyranopterin phosphate + diphosphate. The protein operates within cofactor biosynthesis; molybdopterin biosynthesis. Catalyzes the conversion of (8S)-3',8-cyclo-7,8-dihydroguanosine 5'-triphosphate to cyclic pyranopterin monophosphate (cPMP). In Campylobacter jejuni subsp. doylei (strain ATCC BAA-1458 / RM4099 / 269.97), this protein is Cyclic pyranopterin monophosphate synthase.